Here is a 132-residue protein sequence, read N- to C-terminus: N,N-dimethylformamidase alpha subunit (132 aa).

In terms of assembly, heterotetramer of two DmfA1 (alpha) and two DmfA2 (beta) subunits.

It carries out the reaction N,N-dimethylformamide + H2O = dimethylamine + formate. Activity is slightly inhibited by Mg(2+) and Mn(2+), and slightly increased by Cu(2+). Activity is slightly inhibited by the chelating agents 8-hydroxyquinoline, ethylenediaminetetraacetate, o-phenanthroline and 2,2'-bipyridyl. Hydrolyzes N,N-dimethylformamide, and to a lesser extent N,N-dimethylacetamide and N,N-diethylacetamide. Has no activity against the substituted amides N-methylformamide, N-ethylformamide, N-ethylformamide and N-methylacetamide or the unsubstituted amides formamide, nicotinamide, acetoamide, benzamide, acetamide and acrylamide. In Alcaligenes sp, this protein is N,N-dimethylformamidase alpha subunit.